The following is a 312-amino-acid chain: Putative olfactory receptor 1F2 (312 aa).

Over 1–25 (MERDKPVSVSEFLLLGLSRQPQQQH) the chain is Extracellular. The helical transmembrane segment at 26–49 (LLFVFFLSMYLATVLGNLLIILAI) threads the bilayer. Topologically, residues 50–57 (SIDSRLHT) are cytoplasmic. A helical membrane pass occupies residues 58 to 78 (PMYFFLSNMSFVDNCFSTTVP). The Extracellular portion of the chain corresponds to 79–99 (KMLANHILRTQTISFSGCLMQ). A disulfide bond links cysteine 96 and cysteine 188. The chain crosses the membrane as a helical span at residues 100–119 (MYFISELADMDNFLLAVMAY). At 120–138 (DRFVAVCRPLHYTAKMIHQ) the chain is on the cytoplasmic side. A helical membrane pass occupies residues 139-157 (LCALLVTGSWVVANSNALL). The Extracellular segment spans residues 158-195 (HTLLMARLSFCADNTIPHIFCDVTPLLKLSCSDTHLSE). The chain crosses the membrane as a helical span at residues 196–218 (VMILTEAALVTITPFLCLLASYM). At 219–235 (HITCVVLRVPSTKGRWK) the chain is on the cytoplasmic side. Residues 236–258 (AFSTCGSHLAVVLLFYGTIMSPY) form a helical membrane-spanning segment. Residues 259 to 271 (FRTSSSHSAQRDI) are Extracellular-facing. Residues 272–291 (AAAVRFTVVTPVMNPLIYSL) form a helical membrane-spanning segment. Residues 292–312 (RNKDIKGALVKVVAVKFFSVQ) are Cytoplasmic-facing.

Belongs to the G-protein coupled receptor 1 family.

The protein resides in the cell membrane. In terms of biological role, odorant receptor. The chain is Putative olfactory receptor 1F2 (OR1F2P) from Homo sapiens (Human).